Here is a 276-residue protein sequence, read N- to C-terminus: uncharacterized protein (276 aa).

Residues 20 to 137 enclose the AB hydrolase-1 domain; sequence PVLIFIPGAN…PPINTFLPDS (118 aa). Residues 57-76 are disordered; the sequence is GESELTEPLPDSASNPDSDY.

This sequence belongs to the AB hydrolase superfamily.

This is an uncharacterized protein from Staphylococcus aureus (strain N315).